Consider the following 426-residue polypeptide: Tachykinins (426 aa).

Residues 1–116 (MQCDFRVHQD…IEDNLSHEFE (116 aa)) constitute a propeptide that is removed on maturation. At Arg-127 the chain carries Arginine amide. Positions 131 to 145 (GYLTPDFEDSYFRDE) are excised as a propeptide. Arg-156 carries the post-translational modification Arginine amide. Positions 160–167 (VVSDDDYY) are excised as a propeptide. Residue Arg-178 is modified to Arginine amide. Residues 182 to 235 (SLEEVLGEIEKKAAMDYYDTRDKKTYVFEYPEDYEKRLLASIRGKLKEFPMEWE) constitute a propeptide that is removed on maturation. At Arg-246 the chain carries Arginine amide. The propeptide occupies 250-259 (SLLDEIEELE). The residue at position 270 (Arg-270) is an Arginine amide. The propeptide occupies 274 to 291 (NALENYIDYYLDPDMDFD). The segment at 299–329 (QGMRGKKDSDKRAPMGFQGMRGKRNTGQRFD) is disordered. An Arginine amide modification is found at Arg-302. A propeptide spanning residues 306–308 (DSD) is cleaved from the precursor. Arg-319 carries the post-translational modification Arginine amide. The propeptide occupies 323–358 (NTGQRFDTGINFNIRSSNEYQGTNNRRNALASCQLE). Residues Arg-369 and Arg-386 each carry the arginine amide modification. Residues 390–426 (WATAPYEDDSPFISVFDNTERIGVDGDSPAILGNSIS) constitute a propeptide that is removed on maturation.

This sequence belongs to the tachykinin family. In terms of tissue distribution, tachykinins (TK) are expressed throughout the nervous system. APMGFQGMR-amide is also expressed in the retrocerebral complex (at protein level).

The protein resides in the secreted. In terms of biological role, tachykinins are active peptides which excite neurons, evoke behavioral responses, are potent vasodilators and secretagogues, and contract (directly or indirectly) many smooth muscles. This Camponotus floridanus (Florida carpenter ant) protein is Tachykinins.